Reading from the N-terminus, the 298-residue chain is Glutamyl-Q tRNA(Asp) synthetase (298 aa).

Residues 9 to 13 and Glu-45 each bind L-glutamate; that span reads RFAPS. Residues 12–22 carry the 'HIGH' region motif; it reads PSPSGELHFGS. Cys-101, Cys-103, Tyr-115, and Cys-119 together coordinate Zn(2+). Residues Tyr-172 and Arg-190 each contribute to the L-glutamate site. The short motif at 228–232 is the 'KMSKS' region element; that stretch reads KLSKQ. Lys-231 provides a ligand contact to ATP.

It belongs to the class-I aminoacyl-tRNA synthetase family. GluQ subfamily. The cofactor is Zn(2+).

Functionally, catalyzes the tRNA-independent activation of glutamate in presence of ATP and the subsequent transfer of glutamate onto a tRNA(Asp). Glutamate is transferred on the 2-amino-5-(4,5-dihydroxy-2-cyclopenten-1-yl) moiety of the queuosine in the wobble position of the QUC anticodon. The polypeptide is Glutamyl-Q tRNA(Asp) synthetase (Salmonella typhimurium (strain LT2 / SGSC1412 / ATCC 700720)).